The primary structure comprises 631 residues: Dolichyl-diphosphooligosaccharide--protein glycosyltransferase subunit 2 (631 aa).

An N-terminal signal peptide occupies residues 1 to 22; it reads MASPGASTVFLLALTILAGTQA. At 23–540 the chain is on the lumenal side; it reads LTPTHYLTKP…REPEKRPPTV (518 aa). Asn106 carries N-linked (GlcNAc...) asparagine glycosylation. A Glycyl lysine isopeptide (Lys-Gly) (interchain with G-Cter in ubiquitin) cross-link involves residue Lys154. Residues 541 to 561 traverse the membrane as a helical segment; sequence VSNTFTALILSPLLLLFALWI. The Cytoplasmic portion of the chain corresponds to 562–571; the sequence is RIGANVSNFT. The chain crosses the membrane as a helical span at residues 572-592; sequence FAPSTIIFHLGHAAMLGLMYV. Over 593 to 596 the chain is Lumenal; that stretch reads YWTQ. A helical transmembrane segment spans residues 597–617; sequence LNMFQTLKYLAILGSVTFLAG. At 618-631 the chain is on the cytoplasmic side; the sequence is NRMLAQQAIKRTAH.

Belongs to the SWP1 family. In terms of assembly, component of the oligosaccharyltransferase (OST) complex. OST exists in two different complex forms which contain common core subunits RPN1, RPN2, OST48, OST4, DAD1 and TMEM258, either STT3A or STT3B as catalytic subunits, and form-specific accessory subunits. STT3A complex assembly occurs through the formation of 3 subcomplexes. Subcomplex 1 contains RPN1 and TMEM258, subcomplex 2 contains the STT3A-specific subunits STT3A, DC2/OSTC, and KCP2 as well as the core subunit OST4, and subcomplex 3 contains RPN2, DAD1, and OST48. The STT3A complex can form stable complexes with the Sec61 complex or with both the Sec61 and TRAP complexes. Interacts with DDI2. Interacts with TMEM35A/NACHO.

It localises to the endoplasmic reticulum. It is found in the endoplasmic reticulum membrane. It participates in protein modification; protein glycosylation. Its function is as follows. Subunit of the oligosaccharyl transferase (OST) complex that catalyzes the initial transfer of a defined glycan (Glc(3)Man(9)GlcNAc(2) in eukaryotes) from the lipid carrier dolichol-pyrophosphate to an asparagine residue within an Asn-X-Ser/Thr consensus motif in nascent polypeptide chains, the first step in protein N-glycosylation. N-glycosylation occurs cotranslationally and the complex associates with the Sec61 complex at the channel-forming translocon complex that mediates protein translocation across the endoplasmic reticulum (ER). All subunits are required for a maximal enzyme activity. This chain is Dolichyl-diphosphooligosaccharide--protein glycosyltransferase subunit 2, found in Canis lupus familiaris (Dog).